Reading from the N-terminus, the 550-residue chain is Chaperonin GroEL (550 aa).

Residues 30-33 (TLGP), Lys51, 87-91 (DGTTT), Gly415, and Asp495 contribute to the ATP site.

It belongs to the chaperonin (HSP60) family. In terms of assembly, forms a cylinder of 14 subunits composed of two heptameric rings stacked back-to-back. Interacts with the co-chaperonin GroES.

The protein localises to the cytoplasm. The catalysed reaction is ATP + H2O + a folded polypeptide = ADP + phosphate + an unfolded polypeptide.. Functionally, together with its co-chaperonin GroES, plays an essential role in assisting protein folding. The GroEL-GroES system forms a nano-cage that allows encapsulation of the non-native substrate proteins and provides a physical environment optimized to promote and accelerate protein folding. The protein is Chaperonin GroEL of Shewanella woodyi (strain ATCC 51908 / MS32).